The chain runs to 100 residues: Small ribosomal subunit protein uS14c (100 aa).

Belongs to the universal ribosomal protein uS14 family. In terms of assembly, part of the 30S ribosomal subunit.

The protein resides in the plastid. The protein localises to the chloroplast. Functionally, binds 16S rRNA, required for the assembly of 30S particles. In Barbarea verna (Land cress), this protein is Small ribosomal subunit protein uS14c.